The primary structure comprises 510 residues: Metalloprotease TIKI homolog (510 aa).

Positions 1-30 (MQVKIVQVFPCLVLLVKLVLLSVLLPSATG) are cleaved as a signal peptide. Residues 31-489 (SYHCSNNATQ…FIPSASSGLR (459 aa)) lie on the Extracellular side of the membrane. N-linked (GlcNAc...) asparagine glycans are attached at residues asparagine 37, asparagine 98, asparagine 108, asparagine 141, asparagine 223, asparagine 281, asparagine 322, asparagine 383, and asparagine 417. The span at 435–471 (TSLNSATASTTVATPTSSVTPPTSSSSQTRSLTISDS) shows a compositional bias: low complexity. The segment at 435–477 (TSLNSATASTTVATPTSSVTPPTSSSSQTRSLTISDSQRTSDD) is disordered. A helical transmembrane segment spans residues 490 to 510 (YNIGLVCVTLFFVLLIITSAL).

It belongs to the TIKI family. It depends on Mn(2+) as a cofactor. Co(2+) serves as cofactor.

It localises to the membrane. Metalloprotease. The chain is Metalloprotease TIKI homolog from Amphimedon queenslandica (Sponge).